A 183-amino-acid chain; its full sequence is Lipid droplet coating protein Cap20 (183 aa).

This sequence belongs to the perilipin family.

It is found in the lipid droplet. Functionally, lipid droplet coating protein that regulates lipid metabolism, appressorial turgor pressure, and virulence. Appressorial turgor pressure is important for the mechanical penetration of the host cuticle during infection. This is Lipid droplet coating protein Cap20 (Cap20) from Colletotrichum gloeosporioides (Anthracnose fungus).